The sequence spans 2514 residues: Polyprotein P1234 (2514 aa).

The Alphavirus-like MT domain maps to 28 to 259 (EPKQVTPNDH…ESRKLLQSWH (232 aa)). The tract at residues 244-263 (GSTLYPESRKLLQSWHLPSV) is nsP1 membrane-binding. 2 S-palmitoyl cysteine; by host lipidation sites follow: cysteine 417 and cysteine 419. In terms of domain architecture, (+)RNA virus helicase ATP-binding spans 690 to 842 (DLTSPPYHEF…HNICTQVYHK (153 aa)). An a ribonucleoside 5'-triphosphate-binding site is contributed by 721–728 (GVPGSGKS). In terms of domain architecture, (+)RNA virus helicase C-terminal spans 843–991 (SISRRCTLPV…IKEWEAEHAS (149 aa)). The region spanning 1004–1327 (DTFQNKANVC…NQLNAVYAGL (324 aa)) is the Peptidase C9 domain. The nucleolus localization signal stretch occupies residues 1005 to 1024 (TFQNKANVCWAKCLVPILDT). Cysteine 1013 (for cysteine protease nsP2 activity) is an active-site residue. The Nuclear export signal signature appears at 1058 to 1067 (TRIYGVDLDS). The active-site For cysteine protease nsP2 activity is histidine 1083. The short motif at 1182-1186 (PTKRV) is the Nuclear localization signal element. One can recognise a Macro domain in the interval 1334-1493 (APSYRVKRMD…KITEAISLRS (160 aa)). Aspartate 1343, asparagine 1357, glycine 1365, glycine 1445, valine 1446, and tyrosine 1447 together coordinate ADP-D-ribose. Zn(2+) contacts are provided by cysteine 1595, cysteine 1597, cysteine 1620, and cysteine 1638. 2 consecutive short sequence motifs (FGDF; binding to host G3BP1) follow at residues 1852–1855 (FGDF) and 1870–1873 (FGDF). The RdRp catalytic domain maps to 2268-2383 (DAVLETDIAS…HGVVSDALMA (116 aa)).

As to quaternary structure, interacts with non-structural protein 3. Interacts with RNA-directed RNA polymerase nsP4. Interacts with protease nsP2. interacts with itself. In terms of assembly, interacts with mRNA-capping enzyme nsP1. Interacts with host DDX1. Interacts with host DDX3. Interacts (via C-terminus) with host G3BP1; this interaction inhibits the formation of host stress granules on viral mRNAs and the nsp3-G3BP1 complexes bind viral RNAs and probably orchestrate the assembly of viral replication complexes. Interacts (via C-terminus) with host G3BP2; this interaction inhibits the formation of host stress granules on viral mRNAs and the nsp3-G3BP2 complexes bind viral RNAs and probably orchestrate the assembly of viral replication complexes. Interacts with mRNA-capping enzyme nsP1. Interacts with protease nsP2. interacts with itself. As to quaternary structure, interacts with RNA-directed RNA polymerase nsP4. Interacts with mRNA-capping enzyme nsP1. Interacts with KPNA1/karyopherin-alpha1; this interaction probably allows the active transport of protease nsP2 into the host nucleus. The cofactor is Mg(2+). Requires Mn(2+) as cofactor. Specific enzymatic cleavages in vivo yield mature proteins. The processing of the polyprotein is temporally regulated. In early stages (1.7 hpi), P1234 is first cleaved in trans through its nsP2 protease activity, releasing P123 and nsP4, which associate to form the early replication complex. At the same time, P1234 is also cut at the nsP1/nsP2 site early in infection but with lower efficiency. After replication of the viral minus-strand RNAs (4 hpi), the polyproteins are cut at the nsP1/nsP2 and nsP2/nsP3 sites very efficiently, preventing accumulation of P123 and P1234 and allowing the formation of the late replication complex. NsP3/nsP4 site is not cleaved anymore and P34 is produced rather than nsP4. Post-translationally, specific enzymatic cleavages in vivo yield mature proteins. The processing of the polyprotein is temporally regulated. In early stages (1.7 hpi), P123 is cleaved at the nsP1/nsP2 site with low efficiency. After replication of the viral minus-strand RNAs (4 hpi), the polyproteins are cut at the nsP1/nsP2 and nsP2/nsP3 sites very efficiently, preventing accumulation of P123 and allowing the formation of the late replication complex. In terms of processing, palmitoylated by host palmitoyltransferases ZDHHC2 and ZDHHC19. Phosphorylated by host on serines and threonines. Post-translationally, ubiquitinated; targets the protein for rapid degradation via the ubiquitin system. Nsp4 is present in extremely low quantities due to low frequency of translation through the amber stop-codon and the degradation by the ubiquitin pathway.

It localises to the host cytoplasmic vesicle membrane. The protein localises to the host cell membrane. The protein resides in the host cell projection. Its subcellular location is the host filopodium. It is found in the host nucleus. It localises to the host cytoplasm. The catalysed reaction is GTP + S-adenosyl-L-methionine = N(7)-methyl-GTP + S-adenosyl-L-homocysteine. The enzyme catalyses N(7)-methyl-GTP + L-histidyl-[protein] = N(tele)-(N(7)-methylguanosine 5'-phospho)-L-histidyl-[protein] + diphosphate. It catalyses the reaction N(tele)-(N(7)-methylguanosine 5'-phospho)-L-histidyl-[protein] + a 5'-end diphospho-(purine-ribonucleoside) in mRNA + H(+) = a 5'-end (N(7)-methyl 5'-triphosphoguanosine)-(purine-ribonucleoside) in mRNA + L-histidyl-[protein]. It carries out the reaction a 5'-end triphospho-ribonucleoside in mRNA + H2O = a 5'-end diphospho-ribonucleoside in mRNA + phosphate + H(+). The catalysed reaction is a ribonucleoside 5'-triphosphate + H2O = a ribonucleoside 5'-diphosphate + phosphate + H(+). The enzyme catalyses ATP + H2O = ADP + phosphate + H(+). It catalyses the reaction RNA(n) + a ribonucleoside 5'-triphosphate = RNA(n+1) + diphosphate. It carries out the reaction 4-O-(ADP-D-ribosyl)-L-aspartyl-[protein] + H2O = L-aspartyl-[protein] + ADP-D-ribose + H(+). The catalysed reaction is 5-O-(ADP-D-ribosyl)-L-glutamyl-[protein] + H2O = L-glutamyl-[protein] + ADP-D-ribose + H(+). The enzyme catalyses RNA(n) + ATP = RNA(n)-3'-adenine ribonucleotide + diphosphate. It catalyses the reaction ADP-alpha-D-ribose 1''-phosphate + H2O = ADP-D-ribose + phosphate. Functionally, inactive precursor of the viral replicase, which is activated by cleavages carried out by the viral protease nsP2. In terms of biological role, the early replication complex formed by the polyprotein P123 and nsP4 synthesizes minus-strand RNAs. As soon P123 is cleaved into mature proteins, the plus-strand RNAs synthesis begins. Cytoplasmic capping enzyme that catalyzes two virus-specific reactions: methyltransferase and nsP1 guanylyltransferase. mRNA-capping is necessary since all viral RNAs are synthesized in the cytoplasm, and host capping enzymes are restricted to the nucleus. The enzymatic reaction involves a covalent link between 7-methyl-GMP and nsP1, whereas eukaryotic capping enzymes form a covalent complex only with GMP. nsP1 capping consists in the following reactions: GTP is first methylated into 7-methyl-GMP and then is covalently linked to nsP1 to form the m7GMp-nsP1 complex from which 7-methyl-GMP complex is transferred to the mRNA to create the cap structure. NsP1 is also needed for the initiation of the minus-strand RNAs synthesis. Probably serves as a membrane anchor for the replication complex composed of nsP1-nsP4. Palmitoylated nsP1 is remodeling host cell cytoskeleton, and induces filopodium-like structure formation at the surface of the host cell. Its function is as follows. Multifunctional protein whose N-terminus is part of the RNA polymerase complex and displays NTPase, RNA triphosphatase and helicase activities. NTPase and RNA triphosphatase are involved in viral RNA capping and helicase keeps a check on the dsRNA replication intermediates. The C-terminus harbors a protease that specifically cleaves the polyproteins and releases the mature proteins. Required for the shutoff of minus-strand RNAs synthesis. Specifically inhibits the host IFN response by promoting the nuclear export of host STAT1. Also inhibits host transcription by inducing the rapid proteasome-dependent degradation of POLR2A, a catalytic subunit of the RNAPII complex. The resulting inhibition of cellular protein synthesis serves to ensure maximal viral gene expression and to evade host immune response. Functionally, seems to be essential for minus-strand RNAs and subgenomic 26S mRNAs synthesis. Displays mono-ADP-ribosylhydrolase activity. ADP-ribosylation is a post-translational modification that controls various processes of the host cell and the virus probably needs to revert it for optimal viral replication. Binds proteins of G3BP family and sequesters them into the viral RNA replication complexes thereby inhibiting the formation of host stress granules on viral mRNAs. The nsp3-G3BP complexes bind viral RNAs and probably orchestrate the assembly of viral replication complexes, thanks to the ability of G3BP family members to self-assemble and bind DNA. In terms of biological role, RNA dependent RNA polymerase. Replicates genomic and antigenomic RNA by recognizing replications specific signals. The early replication complex formed by the polyprotein P123 and nsP4 synthesizes minus-strand RNAs. The late replication complex composed of fully processed nsP1-nsP4 is responsible for the production of genomic and subgenomic plus-strand RNAs. The polypeptide is Polyprotein P1234 (O'nyong-nyong virus (strain Gulu) (ONNV)).